The following is a 579-amino-acid chain: Phosphatidylinositol/phosphatidylcholine transfer protein SFH9 (579 aa).

Residues 145-319 form the CRAL-TRIO domain; the sequence is EYEEVQQYYP…FLGGNCKCAH (175 aa). Residues 372 to 419 are disordered; it reads DMSSPDGGHVRERESHPEHDKRAQLSNQAEAVGVGRMEQSDSTSPLPN. Basic and acidic residues predominate over residues 379–394; sequence GHVRERESHPEHDKRA. Residues 512–539 are a coiled coil; that stretch reads QEKEDILRDSLDRIKSIEQDLQKTKKAL.

The protein belongs to the SFH family.

It localises to the golgi apparatus membrane. The protein localises to the cell membrane. In terms of biological role, required for transport of secretory proteins from the Golgi complex. Catalyzes the transfer of phosphatidylinositol and phosphatidylcholine between membranes in vitro. The polypeptide is Phosphatidylinositol/phosphatidylcholine transfer protein SFH9 (SFH9) (Arabidopsis thaliana (Mouse-ear cress)).